A 354-amino-acid chain; its full sequence is Methylthioribose-1-phosphate isomerase (354 aa).

Substrate is bound by residues 58-60 (RGA), arginine 101, and glutamine 204. Aspartate 245 serves as the catalytic Proton donor. 255 to 256 (NK) lines the substrate pocket.

It belongs to the eIF-2B alpha/beta/delta subunits family. MtnA subfamily.

It catalyses the reaction 5-(methylsulfanyl)-alpha-D-ribose 1-phosphate = 5-(methylsulfanyl)-D-ribulose 1-phosphate. Its pathway is amino-acid biosynthesis; L-methionine biosynthesis via salvage pathway; L-methionine from S-methyl-5-thio-alpha-D-ribose 1-phosphate: step 1/6. Its function is as follows. Catalyzes the interconversion of methylthioribose-1-phosphate (MTR-1-P) into methylthioribulose-1-phosphate (MTRu-1-P). The protein is Methylthioribose-1-phosphate isomerase of Xanthomonas euvesicatoria pv. vesicatoria (strain 85-10) (Xanthomonas campestris pv. vesicatoria).